The sequence spans 258 residues: Ribosomal RNA small subunit methyltransferase J (258 aa).

S-adenosyl-L-methionine contacts are provided by residues 104–105, 120–121, and D175; these read RD and ER.

It belongs to the methyltransferase superfamily. RsmJ family.

The protein localises to the cytoplasm. The catalysed reaction is guanosine(1516) in 16S rRNA + S-adenosyl-L-methionine = N(2)-methylguanosine(1516) in 16S rRNA + S-adenosyl-L-homocysteine + H(+). Specifically methylates the guanosine in position 1516 of 16S rRNA. This Chromobacterium violaceum (strain ATCC 12472 / DSM 30191 / JCM 1249 / CCUG 213 / NBRC 12614 / NCIMB 9131 / NCTC 9757 / MK) protein is Ribosomal RNA small subunit methyltransferase J.